A 202-amino-acid chain; its full sequence is Glycerol-3-phosphate acyltransferase (202 aa).

A run of 4 helical transmembrane segments spans residues 2–22, 80–100, 119–139, and 158–178; these read ANLLFALAAYLIGSVSFAVVV, LNETGLAMVALAVFLGHLFPV, AIDPILGLGTLATWLIIAFFF, and VLMNGVDVMTGAIFVISVLLI.

The protein belongs to the PlsY family. Probably interacts with PlsX.

It localises to the cell inner membrane. The enzyme catalyses an acyl phosphate + sn-glycerol 3-phosphate = a 1-acyl-sn-glycero-3-phosphate + phosphate. It functions in the pathway lipid metabolism; phospholipid metabolism. Functionally, catalyzes the transfer of an acyl group from acyl-phosphate (acyl-PO(4)) to glycerol-3-phosphate (G3P) to form lysophosphatidic acid (LPA). This enzyme utilizes acyl-phosphate as fatty acyl donor, but not acyl-CoA or acyl-ACP. In Cupriavidus necator (strain ATCC 17699 / DSM 428 / KCTC 22496 / NCIMB 10442 / H16 / Stanier 337) (Ralstonia eutropha), this protein is Glycerol-3-phosphate acyltransferase.